A 142-amino-acid polypeptide reads, in one-letter code: Regulator of ribonuclease activity B (142 aa).

The tract at residues 117 to 142 (PNADEDEYGEDGEFFDDEFADDDEKR) is disordered.

Belongs to the RraB family. In terms of assembly, interacts with the C-terminal region of Rne.

The protein localises to the cytoplasm. Functionally, globally modulates RNA abundance by binding to RNase E (Rne) and regulating its endonucleolytic activity. Can modulate Rne action in a substrate-dependent manner by altering the composition of the degradosome. This is Regulator of ribonuclease activity B from Actinobacillus succinogenes (strain ATCC 55618 / DSM 22257 / CCUG 43843 / 130Z).